The following is a 297-amino-acid chain: Thiosulfate sulfurtransferase (297 aa).

K14 carries the post-translational modification N6-acetyllysine; alternate. K14 carries the N6-succinyllysine; alternate modification. Positions 25–143 constitute a Rhodanese 1 domain; that stretch reads VGPSLRVLDA…WLKEGHPVTS (119 aa). O-linked (GlcNAc) serine glycosylation is present at S35. S38 is subject to Phosphoserine. K136 is subject to N6-acetyllysine; alternate. K136 is modified (N6-succinyllysine; alternate). Residues 144–159 are hinge; that stretch reads EPSRPEPAVFKATLNR. K163 is modified (N6-acetyllysine). One can recognise a Rhodanese 2 domain in the interval 173–288; the sequence is QSKRFQLVDS…WFRRAPPETR (116 aa). K175 bears the N6-acetyllysine; alternate mark. Residue K175 is modified to N6-succinyllysine; alternate. R187 contacts substrate. At K224 the chain carries N6-acetyllysine; alternate. N6-succinyllysine; alternate is present on K224. At K236 the chain carries N6-acetyllysine. K237 carries the N6-acetyllysine; alternate modification. K237 is subject to N6-succinyllysine; alternate. C248 acts as the Cysteine persulfide intermediate in catalysis. Residue K250 coordinates substrate.

As to quaternary structure, monomer. As to expression, expressed in numerous tissues.

The protein resides in the mitochondrion matrix. It catalyses the reaction thiosulfate + hydrogen cyanide = thiocyanate + sulfite + 2 H(+). Functionally, together with MRPL18, acts as a mitochondrial import factor for the cytosolic 5S rRNA. Only the nascent unfolded cytoplasmic form is able to bind to the 5S rRNA. Involved in the formation of iron-sulfur complexes, cyanide detoxification or modification of sulfur-containing enzymes. Other thiol compounds, besides cyanide, can act as sulfur ion acceptors. Also has weak mercaptopyruvate sulfurtransferase (MST) activity. The sequence is that of Thiosulfate sulfurtransferase (Tst) from Rattus norvegicus (Rat).